We begin with the raw amino-acid sequence, 397 residues long: Presenilin-like protein At2g29900 (397 aa).

The Cytoplasmic segment spans residues 1-17; sequence MDRNQRPRSILDSLGEE. A helical transmembrane segment spans residues 18–38; sequence LIAILTPVSICMFTVVLLVCI. Residues 39-76 are Lumenal-facing; sequence LNSDPSSSSASFSSIATAAYSESDSDSSWDKFVGALLN. Residues 77-97 traverse the membrane as a helical segment; it reads SVVFVAAITVATFVLVLLFYL. Over 98–106 the chain is Cytoplasmic; it reads RCVKFLKFY. The helical transmembrane segment at 107 to 127 threads the bilayer; sequence MGFSAFIVLGNLGGEILVLLI. Residues 128-135 are Lumenal-facing; that stretch reads DRFRFPID. Residues 136–156 form a helical membrane-spanning segment; sequence SITFLILLFNFSVVGVFAVFM. Over 157–158 the chain is Cytoplasmic; sequence SK. Residues 159–179 traverse the membrane as a helical segment; sequence FSILITQGYLVWIGVLVAYFF. Topologically, residues 180-188 are lumenal; it reads TLLPEWTTW. A helical transmembrane segment spans residues 189-209; the sequence is VLLVALALYDIAAVLLPVGPL. Asp-198 is a catalytic residue. The Cytoplasmic portion of the chain corresponds to 210–305; it reads RLLVEMAISR…NSETFLEGIG (96 aa). The chain crosses the membrane as a helical span at residues 306–326; that stretch reads LGSSGAIKLGLGDFIFYSVLV. Residue Asp-318 is part of the active site. Topologically, residues 327 to 336 are lumenal; the sequence is GRAAMYDLMT. The helical transmembrane segment at 337–357 threads the bilayer; the sequence is VYACYLAIIAGLGITLMLLSV. The Cytoplasmic segment spans residues 358 to 366; sequence YQKALPALP. The PAL signature appears at 363-365; it reads PAL. The helical intramembrane region spans 367 to 387; the sequence is VSIMLGVVFYFLARLLLEVFV. The Cytoplasmic portion of the chain corresponds to 388 to 397; it reads VQCSSNLVMF.

This sequence belongs to the peptidase A22A family. Homodimer. Probable component of the gamma-secretase complex, a complex composed of a presenilin homodimer, nicastrin, APH1 and PEN2.

It is found in the endoplasmic reticulum membrane. The protein resides in the golgi apparatus membrane. Probable subunit of the gamma-secretase complex, an endoprotease complex that catalyzes the intramembrane cleavage of integral membrane proteins such as Notch receptors. The chain is Presenilin-like protein At2g29900 from Arabidopsis thaliana (Mouse-ear cress).